A 302-amino-acid polypeptide reads, in one-letter code: tRNA pseudouridine synthase B (302 aa).

D38 acts as the Nucleophile in catalysis.

It belongs to the pseudouridine synthase TruB family. Type 1 subfamily.

It carries out the reaction uridine(55) in tRNA = pseudouridine(55) in tRNA. In terms of biological role, responsible for synthesis of pseudouridine from uracil-55 in the psi GC loop of transfer RNAs. The chain is tRNA pseudouridine synthase B from Geobacillus thermodenitrificans (strain NG80-2).